Here is a 352-residue protein sequence, read N- to C-terminus: D-alanine--D-alanine ligase (352 aa).

In terms of domain architecture, ATP-grasp spans 135 to 344; that stretch reads KTVFAKAGLP…FPQLVDRLIE (210 aa). 171 to 226 lines the ATP pocket; it reads EETLNYPCFVKPANLGSSVGIAKVRSRSELEKALDQAASYDRRIIVEAGVIAREVE. Residues Asp-297, Glu-311, and Asn-313 each contribute to the Mg(2+) site.

The protein belongs to the D-alanine--D-alanine ligase family. Mg(2+) serves as cofactor. Mn(2+) is required as a cofactor.

Its subcellular location is the cytoplasm. It catalyses the reaction 2 D-alanine + ATP = D-alanyl-D-alanine + ADP + phosphate + H(+). Its pathway is cell wall biogenesis; peptidoglycan biosynthesis. Cell wall formation. The polypeptide is D-alanine--D-alanine ligase (Gloeothece citriformis (strain PCC 7424) (Cyanothece sp. (strain PCC 7424))).